The chain runs to 226 residues: Hand transcription factor 1 (226 aa).

Positions 1–15 (MVKSTTAGNNAVSSL) are enriched in polar residues. The disordered stretch occupies residues 1–35 (MVKSTTAGNNAVSSLESTDSKKSRKEKSREKEHRR). The interval 23-36 (SRKEKSREKEHRRA) is basic motif. Residues 23 to 77 (SRKEKSREKEHRRAQCINSAFEILQQHIPYLKSEERKSLPKIKTLRLAMQYIDHL) enclose the bHLH domain. The interval 37-77 (QCINSAFEILQQHIPYLKSEERKSLPKIKTLRLAMQYIDHL) is helix-loop-helix motif.

The protein localises to the nucleus. In terms of biological role, probable transcription factor which regulates early embryonic myogenesis, in cooperation with transcription factors unc-120 and hlh-1. Involved in controlling the number and position of somatic gonadal precursor cells (SGPs) in the gonadal primordium, and embryonic body shape. This is Hand transcription factor 1 from Caenorhabditis elegans.